The chain runs to 320 residues: o-succinylbenzoate synthase (320 aa).

Catalysis depends on K133, which acts as the Proton donor. Mg(2+) is bound by residues D161, E190, and D213. K235 serves as the catalytic Proton acceptor.

It belongs to the mandelate racemase/muconate lactonizing enzyme family. MenC type 1 subfamily. A divalent metal cation serves as cofactor.

The enzyme catalyses (1R,6R)-6-hydroxy-2-succinyl-cyclohexa-2,4-diene-1-carboxylate = 2-succinylbenzoate + H2O. It participates in quinol/quinone metabolism; 1,4-dihydroxy-2-naphthoate biosynthesis; 1,4-dihydroxy-2-naphthoate from chorismate: step 4/7. It functions in the pathway quinol/quinone metabolism; menaquinone biosynthesis. Converts 2-succinyl-6-hydroxy-2,4-cyclohexadiene-1-carboxylate (SHCHC) to 2-succinylbenzoate (OSB). In Shigella boydii serotype 18 (strain CDC 3083-94 / BS512), this protein is o-succinylbenzoate synthase.